The primary structure comprises 64 residues: Large ribosomal subunit protein uL30 (64 aa).

In terms of assembly, part of the 50S ribosomal subunit. The protein is methylated on either Ala-2 or Lys-3.

This Rhodopseudomonas palustris (strain ATCC BAA-98 / CGA009) protein is Large ribosomal subunit protein uL30.